Reading from the N-terminus, the 1415-residue chain is DNA-directed RNA polymerase subunit beta' (1415 aa).

Zn(2+)-binding residues include Cys-72, Cys-74, Cys-87, and Cys-90. Residues Asp-463, Asp-465, and Asp-467 each contribute to the Mg(2+) site. Residues Cys-811, Cys-885, Cys-892, and Cys-895 each coordinate Zn(2+).

This sequence belongs to the RNA polymerase beta' chain family. In terms of assembly, the RNAP catalytic core consists of 2 alpha, 1 beta, 1 beta' and 1 omega subunit. When a sigma factor is associated with the core the holoenzyme is formed, which can initiate transcription. Mg(2+) is required as a cofactor. The cofactor is Zn(2+).

It catalyses the reaction RNA(n) + a ribonucleoside 5'-triphosphate = RNA(n+1) + diphosphate. In terms of biological role, DNA-dependent RNA polymerase catalyzes the transcription of DNA into RNA using the four ribonucleoside triphosphates as substrates. This chain is DNA-directed RNA polymerase subunit beta', found in Cereibacter sphaeroides (strain ATCC 17029 / ATH 2.4.9) (Rhodobacter sphaeroides).